A 94-amino-acid polypeptide reads, in one-letter code: Small ribosomal subunit protein bS6 (94 aa).

This sequence belongs to the bacterial ribosomal protein bS6 family.

Its function is as follows. Binds together with bS18 to 16S ribosomal RNA. This chain is Small ribosomal subunit protein bS6, found in Fusobacterium nucleatum subsp. nucleatum (strain ATCC 25586 / DSM 15643 / BCRC 10681 / CIP 101130 / JCM 8532 / KCTC 2640 / LMG 13131 / VPI 4355).